The primary structure comprises 279 residues: Oxygen-dependent coproporphyrinogen-III oxidase (279 aa).

A substrate-binding site is contributed by Ser102. Positions 106 and 116 each coordinate a divalent metal cation. Residue His116 is the Proton donor of the active site. Position 118-120 (118-120 (NTR)) interacts with substrate. A divalent metal cation contacts are provided by His149 and His179. The interval 244-279 (YVEFNLLYDRGTKFGLMTDGNVEAILMSLPPEVKWA) is important for dimerization.

It belongs to the aerobic coproporphyrinogen-III oxidase family. Homodimer. It depends on a divalent metal cation as a cofactor.

Its subcellular location is the cytoplasm. It carries out the reaction coproporphyrinogen III + O2 + 2 H(+) = protoporphyrinogen IX + 2 CO2 + 2 H2O. Its pathway is porphyrin-containing compound metabolism; protoporphyrin-IX biosynthesis; protoporphyrinogen-IX from coproporphyrinogen-III (O2 route): step 1/1. Functionally, involved in the heme biosynthesis. Catalyzes the aerobic oxidative decarboxylation of propionate groups of rings A and B of coproporphyrinogen-III to yield the vinyl groups in protoporphyrinogen-IX. The chain is Oxygen-dependent coproporphyrinogen-III oxidase from Rickettsia bellii (strain RML369-C).